The primary structure comprises 376 residues: Erythronate-4-phosphate dehydrogenase (376 aa).

The substrate site is built by S45 and T67. D147 provides a ligand contact to NAD(+). R209 is a catalytic residue. Position 233 (D233) interacts with NAD(+). The active site involves E238. H255 (proton donor) is an active-site residue. Residue G258 participates in NAD(+) binding. Y259 is a binding site for substrate.

Belongs to the D-isomer specific 2-hydroxyacid dehydrogenase family. PdxB subfamily. As to quaternary structure, homodimer.

Its subcellular location is the cytoplasm. It carries out the reaction 4-phospho-D-erythronate + NAD(+) = (R)-3-hydroxy-2-oxo-4-phosphooxybutanoate + NADH + H(+). Its pathway is cofactor biosynthesis; pyridoxine 5'-phosphate biosynthesis; pyridoxine 5'-phosphate from D-erythrose 4-phosphate: step 2/5. Functionally, catalyzes the oxidation of erythronate-4-phosphate to 3-hydroxy-2-oxo-4-phosphonooxybutanoate. This is Erythronate-4-phosphate dehydrogenase from Shewanella halifaxensis (strain HAW-EB4).